A 41-amino-acid chain; its full sequence is Photosystem I reaction center subunit IX (41 aa).

A helical membrane pass occupies residues 7–27 (YLSTAPVVALIWFTFTAGLLI).

This sequence belongs to the PsaJ family.

Its subcellular location is the plastid. The protein resides in the chloroplast thylakoid membrane. May help in the organization of the PsaE and PsaF subunits. This Pleurastrum terricola (Filamentous green alga) protein is Photosystem I reaction center subunit IX.